The primary structure comprises 627 residues: Carene synthase 2, chloroplastic (627 aa).

The N-terminal 36 residues, 1–36 (MSVISIVPLASKSCLYKSLMSSTHELKALCRPIVTL), are a transit peptide targeting the chloroplast. The Mg(2+) site is built by Asp-378, Asp-382, and Asp-530. The DDXXD motif signature appears at 378–382 (DDMYD).

It belongs to the terpene synthase family. Tpsd subfamily. Mg(2+) serves as cofactor. Mn(2+) is required as a cofactor.

It is found in the plastid. The protein resides in the chloroplast. It carries out the reaction (2E)-geranyl diphosphate = (+)-car-3-ene + diphosphate. It functions in the pathway terpene metabolism; oleoresin biosynthesis. Its function is as follows. Terpene synthase (TPS) involved in defensive oleoresin formation in conifers in response to insect attack (e.g. white pine weevil P.strobi) or other injury. This is Carene synthase 2, chloroplastic (TPS-3car2) from Picea sitchensis (Sitka spruce).